The chain runs to 230 residues: Urease accessory protein UreG (230 aa).

The segment at 1-31 is disordered; that stretch reads MPPHFLSADSTGQPHRHADRPKRVRTPGEPL. Positions 14 to 25 are enriched in basic residues; it reads PHRHADRPKRVR. 37–44 contacts GTP; that stretch reads GPVGSGKT.

It belongs to the SIMIBI class G3E GTPase family. UreG subfamily. Homodimer. UreD, UreF and UreG form a complex that acts as a GTP-hydrolysis-dependent molecular chaperone, activating the urease apoprotein by helping to assemble the nickel containing metallocenter of UreC. The UreE protein probably delivers the nickel.

Its subcellular location is the cytoplasm. Its function is as follows. Facilitates the functional incorporation of the urease nickel metallocenter. This process requires GTP hydrolysis, probably effectuated by UreG. This chain is Urease accessory protein UreG, found in Mycobacterium sp. (strain JLS).